The following is a 296-amino-acid chain: Protoheme IX farnesyltransferase (296 aa).

9 consecutive transmembrane segments (helical) span residues 27–47, 48–68, 98–118, 120–140, 148–168, 175–195, 219–239, 242–262, and 274–294; these read IMYLVVFTASTGMIMAPGTIH, PLIGLVSALCIAMGSGAAGAL, ALECGLALSLLSVFIMSLTVN, VSAILLACSIAFYAVVYTMVL, IVIGGIAGAFPPVIGWTSVTG, LLLFMIIFLWTPPHFWALSLL, HIMGYSLLLFIVALLPGLYVA, VLYEIIATSLGAVFLTHAYCL, and CMGLFSFSIYYLFLIFSAIAL.

It belongs to the UbiA prenyltransferase family. Protoheme IX farnesyltransferase subfamily.

The protein localises to the cell inner membrane. The enzyme catalyses heme b + (2E,6E)-farnesyl diphosphate + H2O = Fe(II)-heme o + diphosphate. Its pathway is porphyrin-containing compound metabolism; heme O biosynthesis; heme O from protoheme: step 1/1. Functionally, converts heme B (protoheme IX) to heme O by substitution of the vinyl group on carbon 2 of heme B porphyrin ring with a hydroxyethyl farnesyl side group. In Anaplasma phagocytophilum (strain HZ), this protein is Protoheme IX farnesyltransferase.